We begin with the raw amino-acid sequence, 532 residues long: CTP synthase (532 aa).

Residues 1 to 268 are amidoligase domain; it reads MTTKYIFVTG…DEIVCDHLNL (268 aa). Ser14 contributes to the CTP binding site. Ser14 serves as a coordination point for UTP. 15–20 is an ATP binding site; sequence SLGKGI. Position 55 (Tyr55) interacts with L-glutamine. Asp72 provides a ligand contact to ATP. Positions 72 and 142 each coordinate Mg(2+). CTP contacts are provided by residues 149–151, 189–194, and Lys225; these read DIE and KSKPTQ. UTP is bound by residues 189-194 and Lys225; that span reads KSKPTQ. 241 to 243 is a binding site for ATP; that stretch reads RDA. Residues 293-532 enclose the Glutamine amidotransferase type-1 domain; sequence KIALVGKYVA…REFIQASLRK (240 aa). Gly355 contacts L-glutamine. Cys382 (nucleophile; for glutamine hydrolysis) is an active-site residue. Residues 383 to 386, Glu406, and Arg463 each bind L-glutamine; that span reads LGMQ. Residues His508 and Glu510 contribute to the active site.

It belongs to the CTP synthase family. In terms of assembly, homotetramer.

It carries out the reaction UTP + L-glutamine + ATP + H2O = CTP + L-glutamate + ADP + phosphate + 2 H(+). It catalyses the reaction L-glutamine + H2O = L-glutamate + NH4(+). The enzyme catalyses UTP + NH4(+) + ATP = CTP + ADP + phosphate + 2 H(+). Its pathway is pyrimidine metabolism; CTP biosynthesis via de novo pathway; CTP from UDP: step 2/2. Its activity is regulated as follows. Allosterically activated by GTP, when glutamine is the substrate; GTP has no effect on the reaction when ammonia is the substrate. The allosteric effector GTP functions by stabilizing the protein conformation that binds the tetrahedral intermediate(s) formed during glutamine hydrolysis. Inhibited by the product CTP, via allosteric rather than competitive inhibition. Functionally, catalyzes the ATP-dependent amination of UTP to CTP with either L-glutamine or ammonia as the source of nitrogen. Regulates intracellular CTP levels through interactions with the four ribonucleotide triphosphates. The protein is CTP synthase of Halalkalibacterium halodurans (strain ATCC BAA-125 / DSM 18197 / FERM 7344 / JCM 9153 / C-125) (Bacillus halodurans).